Consider the following 473-residue polypeptide: Glutamate--tRNA ligase (473 aa).

A 'HIGH' region motif is present at residues 11 to 21 (PSPTGFLHIGG). The short motif at 240 to 244 (KLSKR) is the 'KMSKS' region element. An ATP-binding site is contributed by lysine 243.

Belongs to the class-I aminoacyl-tRNA synthetase family. Glutamate--tRNA ligase type 1 subfamily. Monomer.

The protein resides in the cytoplasm. It catalyses the reaction tRNA(Glu) + L-glutamate + ATP = L-glutamyl-tRNA(Glu) + AMP + diphosphate. Catalyzes the attachment of glutamate to tRNA(Glu) in a two-step reaction: glutamate is first activated by ATP to form Glu-AMP and then transferred to the acceptor end of tRNA(Glu). In Rhodopseudomonas palustris (strain TIE-1), this protein is Glutamate--tRNA ligase.